The chain runs to 443 residues: Aklavinone 7-beta-L-rhodosaminyltransferase (443 aa).

An N-terminal signal peptide occupies residues 1 to 23; that stretch reads MRVLLTSFALDAHFNGSVPLAWA.

Belongs to the glycosyltransferase 28 family.

The catalysed reaction is dTDP-beta-L-rhodosamine + aklavinone = aclacinomycin T + dTDP + 2 H(+). The activity of AknS is substantially increased by the addition of the accessory protein AknT. In terms of biological role, involved in the biosynthesis of the anthracycline antitumor agent aclacinomycin A. Catalyzes the transfer of the proximal deoxyhexose, L-rhodosamine, from dTDP-beta-L-rhodosamine to the C7-OH of aklavinone aglycone to yield aclacinomycin T (rhodosaminyl-aklavinone). It can also use dTDP-2-deoxy-beta-L-fucose, TDP-2-deoxyfucose, dTDP-4-amino-2-deoxyrhamnose, TDP-L-rhodosamine as sugar donor and epsilon-rhodomycinone as sugar acceptor. This is Aklavinone 7-beta-L-rhodosaminyltransferase from Streptomyces galilaeus.